Consider the following 466-residue polypeptide: MSGPVDLRALPSVDQMLNAAAVSPLVEQHGRAVVTDELRKVLGEVRLAVRSGGALPGKDGIVAALLSRLDDRSRSNLRPLFNLTGTVLHTNLGRALLAQEAVDAAVDAMREAAALEFDLDSGGRGERDSHLRELLCELTGAEDATVVNNNAAAVLIALNSVGAGRQAIVSRGELIEIGGAFRMPDIMERAGVDLVEVGTTNRTHAKDYVKAIGPETALILKVHTSNYRIEGFTAEVPGAELAAIAHERGVVLLNDLGSGSLVDLSRYGLGREPTVREAVAEGADLVTFSGDKLLGGPQAGFIVGRRDLIAEINRNPLKRALRVDKIRIAATAATLKLYRDPDRLASRLPTLFMLSRVQAEVRAQAERLAPQVGAMLAPSGYAVEVCSCSSQIGSGALPVDTIPSAGLRIVGSSGSALEALAALFRSLSRPILGRLRDGALVLDLRCLSDEAEFLKTLSEGSGDAVA.

Lysine 292 is modified (N6-(pyridoxal phosphate)lysine).

The protein belongs to the SelA family. The cofactor is pyridoxal 5'-phosphate.

The protein localises to the cytoplasm. The enzyme catalyses L-seryl-tRNA(Sec) + selenophosphate + H(+) = L-selenocysteinyl-tRNA(Sec) + phosphate. Its pathway is aminoacyl-tRNA biosynthesis; selenocysteinyl-tRNA(Sec) biosynthesis; selenocysteinyl-tRNA(Sec) from L-seryl-tRNA(Sec) (bacterial route): step 1/1. Converts seryl-tRNA(Sec) to selenocysteinyl-tRNA(Sec) required for selenoprotein biosynthesis. This is L-seryl-tRNA(Sec) selenium transferase from Rhizobium meliloti (strain 1021) (Ensifer meliloti).